Consider the following 365-residue polypeptide: Centrosomal protein of 41 kDa (365 aa).

In terms of domain architecture, Rhodanese spans 177–274 (EDCPFLLLDV…ISQKFPQGLT (98 aa)). The interval 327–365 (MSTSTPSRLRMDSRNSKVPSSASSARSQSSTSSHSKPWK) is disordered. Low complexity predominate over residues 342 to 365 (SKVPSSASSARSQSSTSSHSKPWK).

The protein belongs to the CEP41 family.

It is found in the cytoplasm. It localises to the cytoskeleton. The protein resides in the microtubule organizing center. The protein localises to the centrosome. Its subcellular location is the cell projection. It is found in the cilium. It localises to the cilium basal body. Required during ciliogenesis for tubulin glutamylation in cilium. Probably acts by participating in the transport of tubulin polyglutamylases between the basal body and the cilium. The chain is Centrosomal protein of 41 kDa (cep41) from Xenopus tropicalis (Western clawed frog).